Consider the following 366-residue polypeptide: Phospho-2-dehydro-3-deoxyheptonate aldolase (366 aa).

The protein belongs to the class-I DAHP synthase family.

The catalysed reaction is D-erythrose 4-phosphate + phosphoenolpyruvate + H2O = 7-phospho-2-dehydro-3-deoxy-D-arabino-heptonate + phosphate. It functions in the pathway metabolic intermediate biosynthesis; chorismate biosynthesis; chorismate from D-erythrose 4-phosphate and phosphoenolpyruvate: step 1/7. In terms of biological role, stereospecific condensation of phosphoenolpyruvate (PEP) and D-erythrose-4-phosphate (E4P) giving rise to 3-deoxy-D-arabino-heptulosonate-7-phosphate (DAHP). This chain is Phospho-2-dehydro-3-deoxyheptonate aldolase (aroG), found in Corynebacterium glutamicum (strain ATCC 13032 / DSM 20300 / JCM 1318 / BCRC 11384 / CCUG 27702 / LMG 3730 / NBRC 12168 / NCIMB 10025 / NRRL B-2784 / 534).